Reading from the N-terminus, the 131-residue chain is Cruxhalorhodopsin-1 (131 aa).

Residues 1–11 (PMILLALGLLA) form a helical membrane-spanning segment. Topologically, residues 12–14 (DTD) are cytoplasmic. The helical transmembrane segment at 15–38 (IASLFTAITMDIGMCVTGLAAALI) threads the bilayer. The Extracellular segment spans residues 39–41 (TSS). The helical transmembrane segment at 42-64 (HLLRWVFYGISCAFFVAVLYVLL) threads the bilayer. The Cytoplasmic segment spans residues 65–76 (VQWPADAEAAGT). A helical transmembrane segment spans residues 77–100 (SEIFGTLKILTVVLWLGYPILWAL). The Extracellular portion of the chain corresponds to 101–109 (GSEGVALLS). A helical transmembrane segment spans residues 110–131 (VGVTSWGYSGLDILAKYVFAFI). Lys125 carries the N6-(retinylidene)lysine modification.

It belongs to the archaeal/bacterial/fungal opsin family.

It is found in the cell membrane. Functionally, light-driven chloride pump. The protein is Cruxhalorhodopsin-1 (choP1) of Haloarcula argentinensis.